We begin with the raw amino-acid sequence, 34 residues long: Cycloamanide B proprotein (34 aa).

Residues 1 to 10 (MSDINAARLP) constitute a propeptide that is removed on maturation. The segment at residues 11-17 (SFFFPIP) is a cross-link (cyclopeptide (Ser-Pro)). The propeptide occupies 18–34 (CISDDIEMVLTRGESLC).

It belongs to the MSDIN fungal toxin family. In terms of processing, processed by the macrocyclase-peptidase enzyme POPB to yield a cyclic decapeptide. POPB first removes 10 residues from the N-terminus. Conformational trapping of the remaining peptide forces the enzyme to release this intermediate rather than proceed to macrocyclization. The enzyme rebinds the remaining peptide in a different conformation and catalyzes macrocyclization of the N-terminal 7 residues.

Cyclic heptapeptide that belongs to the MSDIN-like toxin family responsible for a large number of food poisoning cases and deaths. Cycloaminide B is non-toxic to mammals but shows immunosuppressive activity, probably through the inhibition of the action of interleukin-1 and interleukin-2. The sequence is that of Cycloamanide B proprotein from Amanita phalloides (Death cap).